Reading from the N-terminus, the 208-residue chain is Protein-L-isoaspartate O-methyltransferase (208 aa).

Serine 59 is a catalytic residue.

It belongs to the methyltransferase superfamily. L-isoaspartyl/D-aspartyl protein methyltransferase family.

It is found in the cytoplasm. It carries out the reaction [protein]-L-isoaspartate + S-adenosyl-L-methionine = [protein]-L-isoaspartate alpha-methyl ester + S-adenosyl-L-homocysteine. In terms of biological role, catalyzes the methyl esterification of L-isoaspartyl residues in peptides and proteins that result from spontaneous decomposition of normal L-aspartyl and L-asparaginyl residues. It plays a role in the repair and/or degradation of damaged proteins. In Vibrio atlanticus (strain LGP32) (Vibrio splendidus (strain Mel32)), this protein is Protein-L-isoaspartate O-methyltransferase.